Consider the following 332-residue polypeptide: MIDSRLPLTDIHRHLDGNIRAQTILDLGRQFNLALPADELEALRPHVQITHAEPDLVSFLQKLDWGVAVLGDLEACRRVAYENVEDAANAGLHYAELRFSPYYMAMKHQLPVTGVVEAVIDGIRSGSRDLGIDVRLIGIMSRTFGEAACLQELEGLLAHRDGITALDLAGDELGFPGGLFLNHFNRARDAGLRITVHAGEAAGPESIWQAIRELGAERIGHGVKAVEDPALMDFLAEHGIGIESCLTSNIQTSTVASLAQHPLAKFLRHGVMASINTDDPAVQGIEIEHEYLVAAPQAGLTPAEIRTAQENGLKMAFLSEQEKQTLRDKVRG.

The Zn(2+) site is built by His-12 and His-14. 3 residues coordinate substrate: His-14, Asp-16, and Gly-170. Position 197 (His-197) interacts with Zn(2+). The active-site Proton donor is Glu-200. Residue Asp-278 coordinates Zn(2+). Asp-279 is a substrate binding site.

This sequence belongs to the metallo-dependent hydrolases superfamily. Adenosine and AMP deaminases family. Adenosine deaminase subfamily. Requires Zn(2+) as cofactor.

The enzyme catalyses adenosine + H2O + H(+) = inosine + NH4(+). It catalyses the reaction 2'-deoxyadenosine + H2O + H(+) = 2'-deoxyinosine + NH4(+). In terms of biological role, catalyzes the hydrolytic deamination of adenosine and 2-deoxyadenosine. This Serratia proteamaculans (strain 568) protein is Adenosine deaminase.